A 569-amino-acid chain; its full sequence is Nucleoprotein (569 aa).

A binding site for the cap structure m7GTP region spans residues 54–241 (MRKERRDDND…IDTKKSSLNI (188 aa)). Mn(2+)-binding residues include Asp-389 and Glu-391. Residues Glu-399, Cys-506, His-509, and Cys-529 each contribute to the Zn(2+) site. A Mn(2+)-binding site is contributed by Asp-533.

It belongs to the arenaviridae nucleocapsid protein family. As to quaternary structure, homomultimerizes to form the nucleocapsid. Binds to viral genomic RNA. Interacts with glycoprotein G2. Interacts with protein Z; this interaction probably directs the encapsidated genome to budding sites. Interacts with protein L; this interaction does not interfere with Z-L interaction. Interacts with host IKBKE (via Protein kinase domain); the interaction inhibits IKBKE kinase activity.

The protein resides in the virion. It is found in the host cytoplasm. Encapsidates the genome, protecting it from nucleases. The encapsidated genomic RNA is termed the nucleocapsid (NC). Serves as template for viral transcription and replication. The increased presence of protein N in host cell does not seem to trigger the switch from transcription to replication as observed in other negative strain RNA viruses. Through the interaction with host IKBKE, strongly inhibits the phosphorylation and nuclear translocation of host IRF3, a protein involved in interferon activation pathway, leading to the inhibition of interferon-beta and IRF3-dependent promoters activation. Also encodes a functional 3'-5' exoribonuclease that degrades preferentially dsRNA substrates and thereby participates in the suppression of interferon induction. The protein is Nucleoprotein of Lassa virus (strain Mouse/Sierra Leone/Josiah/1976) (LASV).